The chain runs to 333 residues: Protein FanF (333 aa).

The N-terminal stretch at 1–22 (MKNKYNLLFFLFLLCYGDVALA) is a signal peptide.

In terms of processing, three disulfide bonds are present.

The protein localises to the fimbrium. Its function is as follows. Minor component of K99 fimbriae. Is not required for binding of K99 fimbriae to the ganglioside receptor. May play a role in initiation, elongation and flexibility of the fimbriae. This Escherichia coli protein is Protein FanF (fanF).